The primary structure comprises 874 residues: Alanine--tRNA ligase (874 aa).

Positions 562, 566, 665, and 669 each coordinate Zn(2+).

The protein belongs to the class-II aminoacyl-tRNA synthetase family. Zn(2+) is required as a cofactor.

Its subcellular location is the cytoplasm. The catalysed reaction is tRNA(Ala) + L-alanine + ATP = L-alanyl-tRNA(Ala) + AMP + diphosphate. Its function is as follows. Catalyzes the attachment of alanine to tRNA(Ala) in a two-step reaction: alanine is first activated by ATP to form Ala-AMP and then transferred to the acceptor end of tRNA(Ala). Also edits incorrectly charged Ser-tRNA(Ala) and Gly-tRNA(Ala) via its editing domain. The protein is Alanine--tRNA ligase of Pseudomonas putida (strain GB-1).